The sequence spans 349 residues: Isopentenyl-diphosphate delta-isomerase (349 aa).

9–10 (RK) lines the substrate pocket. FMN contacts are provided by residues 65-67 (AMT), S95, and N124. 95-97 (STH) contributes to the substrate binding site. Residue Q154 participates in substrate binding. E155 contributes to the Mg(2+) binding site. FMN-binding positions include K186, S211, T216, 262-264 (GLR), and 283-284 (SR).

This sequence belongs to the IPP isomerase type 2 family. In terms of assembly, homooctamer. Dimer of tetramers. The cofactor is FMN. NADPH serves as cofactor. Mg(2+) is required as a cofactor.

It localises to the cytoplasm. The enzyme catalyses isopentenyl diphosphate = dimethylallyl diphosphate. Involved in the biosynthesis of isoprenoids. Catalyzes the 1,3-allylic rearrangement of the homoallylic substrate isopentenyl (IPP) to its allylic isomer, dimethylallyl diphosphate (DMAPP). This chain is Isopentenyl-diphosphate delta-isomerase, found in Staphylococcus aureus.